The chain runs to 115 residues: Non-specific lipid-transfer protein 4.1 (115 aa).

The N-terminal stretch at 1–25 is a signal peptide; it reads MARAAASQLVLVALVAAMLLVAADA. 4 disulfides stabilise this stretch: cysteine 29/cysteine 77, cysteine 39/cysteine 54, cysteine 55/cysteine 97, and cysteine 75/cysteine 111.

This sequence belongs to the plant LTP family.

In terms of biological role, plant non-specific lipid-transfer proteins transfer phospholipids as well as galactolipids across membranes. May play a role in wax or cutin deposition in the cell walls of expanding epidermal cells and certain secretory tissues. This is Non-specific lipid-transfer protein 4.1 (LTP4.1) from Hordeum vulgare (Barley).